The sequence spans 119 residues: C-C motif chemokine 24 (119 aa).

The signal sequence occupies residues 1–26 (MAGLMTIVTSLLFLGVCAHHIIPTGS). Disulfide bonds link Cys33-Cys58 and Cys34-Cys74. N-linked (GlcNAc...) asparagine glycosylation occurs at Asn115.

The protein belongs to the intercrine beta (chemokine CC) family. N-glycosylated. Activated monocytes and activated T lymphocytes.

It localises to the secreted. Chemotactic for resting T-lymphocytes, and eosinophils. Has lower chemotactic activity for neutrophils but none for monocytes and activated lymphocytes. Is a strong suppressor of colony formation by a multipotential hematopoietic progenitor cell line. Binds to CCR3. This chain is C-C motif chemokine 24, found in Homo sapiens (Human).